The primary structure comprises 419 residues: Mitogen-activated protein kinase spm1 (419 aa).

One can recognise a Protein kinase domain in the interval 23–314 (YTVTKELGQG…VEEALEHPYL (292 aa)). Residues 29 to 37 (LGQGAYGIV) and Lys-52 contribute to the ATP site. Asp-149 serves as the catalytic Proton acceptor.

It belongs to the protein kinase superfamily. Ser/Thr protein kinase family. MAP kinase subfamily. It depends on Mg(2+) as a cofactor. In terms of processing, phosphorylated by the MAP kinase kinase mkk1.

The catalysed reaction is L-seryl-[protein] + ATP = O-phospho-L-seryl-[protein] + ADP + H(+). It carries out the reaction L-threonyl-[protein] + ATP = O-phospho-L-threonyl-[protein] + ADP + H(+). Functionally, mitogen-activated protein kinase, part of the mkh1-mkk1-spm1 MAPK cascade that regulates vegetative growth, conidial formation, colony surface hydrophobicity, osmotic stress, cell wall integrity maintenance, carbon and nitrogen source utilization, chitin distribution, septa formation, and pathogenicity. The sequence is that of Mitogen-activated protein kinase spm1 from Cytospora mali (Apple Valsa canker fungus).